The following is a 268-amino-acid chain: Probable 1-acyl-sn-glycerol-3-phosphate acyltransferase (268 aa).

Residues 92–97 carry the HXXXXD motif motif; the sequence is HKSNLD.

Belongs to the 1-acyl-sn-glycerol-3-phosphate acyltransferase family.

It catalyses the reaction a 1-acyl-sn-glycero-3-phosphate + an acyl-CoA = a 1,2-diacyl-sn-glycero-3-phosphate + CoA. The protein operates within phospholipid metabolism; CDP-diacylglycerol biosynthesis; CDP-diacylglycerol from sn-glycerol 3-phosphate: step 2/3. In terms of biological role, converts lysophosphatidic acid (LPA) into phosphatidic acid by incorporating acyl moiety at the 2 position. This is Probable 1-acyl-sn-glycerol-3-phosphate acyltransferase (plsC) from Mycoplasma genitalium (strain ATCC 33530 / DSM 19775 / NCTC 10195 / G37) (Mycoplasmoides genitalium).